The following is a 451-amino-acid chain: Adenylosuccinate synthetase isozyme 2 (451 aa).

Residues 34-40 (GDEGKGK) and 62-64 (GHT) contribute to the GTP site. D35 functions as the Proton acceptor in the catalytic mechanism. Positions 35 and 62 each coordinate Mg(2+). Substrate is bound at residue D35. Residues 35-38 (DEGK), 60-63 (NAGH), T157, R171, N250, T265, and R329 each bind IMP. H63 functions as the Proton donor in the catalytic mechanism. 325–331 (VTTGRKR) is a binding site for substrate. Residues R331, 357–359 (KLD), and 439–442 (GVGK) each bind GTP.

It belongs to the adenylosuccinate synthetase family. Homodimer. Requires Mg(2+) as cofactor.

The protein resides in the cytoplasm. Its subcellular location is the mitochondrion. The catalysed reaction is IMP + L-aspartate + GTP = N(6)-(1,2-dicarboxyethyl)-AMP + GDP + phosphate + 2 H(+). It functions in the pathway purine metabolism; AMP biosynthesis via de novo pathway; AMP from IMP: step 1/2. Inhibited competitively by AMP and IMP and non-competitively by fructose 1,6-bisphosphate. In terms of biological role, plays an important role in the de novo pathway and in the salvage pathway of purine nucleotide biosynthesis. Catalyzes the first committed step in the biosynthesis of AMP from IMP. This chain is Adenylosuccinate synthetase isozyme 2, found in Gallus gallus (Chicken).